The following is a 520-amino-acid chain: MDEERALYIVRAGEAGAIERVLRDYSDKHRATFKFESADEDKRKKLCEGIFKVLVKEVPTTCQVSCLEVLRILSRDKKILVPVTTKENMQILLRLAKLHESDDSLEKVSEFPVIVESLKCLCNIVFNSQMAQQLSLELNLAAKLCNLLRKCKDRKFINDIKCFDLRLLFVLSLLHTDIRSQLRYELQGLPLLTQILESAFSIKWTDEYESAIDHNGPPLSPQETDCAIEALKALFNVTVDSWKVHKESDSHQFRVMAAVLRHCLLIVGPTEDKTEELHSNAVNLLSNVPVSCLDVLICPLTHEETAQEAATLDELPSDKTTEKDTALKNSTMVYNGMNMEAIHVLLNFMEKRIDKGSSYREGLTPVLSLLTECSRAHRNIRKFLKDQVLPPLRDVTNRPEVGSTVRNKLVRLMTHVDLGVKQIAAEFLFVLCKERVDSLLKYTGYGNAAGLLAARGLLAGGRGDNWYSEDEDTDTEEYKNAKPKEELLKPMGLKPDGTITPLEEALSQYSVIEETSSDTD.

Ser468 is modified (phosphoserine). The residue at position 473 (Thr473) is a Phosphothreonine.

Belongs to the synembryn family. As to quaternary structure, interacts with GDP-bound G(s) G-alpha proteins GNAL and GNAS. Does not interact with G-alpha proteins when they are in complex with subunits beta and gamma. In terms of tissue distribution, predominantly expressed in the mature olfactory sensory neurons and also in a few regions in the brain.

The protein resides in the cytoplasm. Its subcellular location is the cell cortex. Chaperone that specifically binds and folds nascent G(s) G-alpha proteins (GNAS and GNAL) prior to G protein heterotrimer formation, promoting their association with the plasma membrane. Also acts as a guanine nucleotide exchange factor (GEF) for G(s) proteins by stimulating exchange of bound GDP for free GTP. Acts as an important component for odorant signal transduction by mediating GNAL (G(olf)-alpha) folding, thereby promoting-dependent cAMP accumulation in olfactory sensory neurons. The protein is Chaperone Ric-8B of Mus musculus (Mouse).